The sequence spans 609 residues: MDTPEKSETQIGTPVSKLKVEDSPVFSYICNLSPIKTIKPIPITCPLSSLNYASPPSVFTSPHAVSHKESRFRSQKDVSASKEVGEEEALVGSEPEQSYKNDCNTPRVTNDVKDNGCGKDLQVMMDNVKKKSDTPDWETLIAATTELIYGSPRESEAFSCLLKKTSNSEARLRGSITATSVAVTNTDVVNNESESVDALSILHRGVRRRCLDFEVKGNNQQTLGESSSSCVVPSIGLHLNTIAMSSKDKNVANEYSFSGNIKVGVQSSLTPVLHSQHDIVRENESGKDSGQIIEVVPKSLASVDLTPISPKKKRRKSEQSGEGDSSCKRCNCKKSKCLKLYCECFAAGFYCIEPCSCINCFNKPIHKDVVLATRKQIESRNPLAFAPKVIRNSDSIIEVGEDASKTPASARHKRGCNCKKSNCLKKYCECYQGGVGCSINCRCEGCKNAFGRKDGSLFEQDEENETSGTPGTKKTQQNVELFKPAAPPSTPIPFRQPLAQLPISSNNRLLPPQSHFHHGAIGSSSSGIYNIRKPDMSLLSHSRIETITEDIDDMSENLIHSPITTLSPNSKRVSLSHLDSPESTPWRRNGGGRNLIRSFPTFPSLTPHH.

Residues 69 to 84 (ESRFRSQKDVSASKEV) show a composition bias toward basic and acidic residues. Disordered regions lie at residues 69 to 102 (ESRF…YKND), 307 to 328 (PISP…SSCK), 457 to 477 (LFEQ…KTQQ), and 569 to 609 (NSKR…TPHH). Residues 326-451 (SCKRCNCKKS…RCEGCKNAFG (126 aa)) enclose the CRC domain. A compositionally biased stretch (polar residues) spans 466–477 (TSGTPGTKKTQQ).

It belongs to the lin-54 family. Ubiquitous but expressed mostly in flowers and at significant levels in leaves. Detected with highest levels in developing ovules and microspores, and in petals.

The protein resides in the nucleus. Plays a role in development of both male and female reproductive tissues. This chain is Protein tesmin/TSO1-like CXC 3 (TCX3), found in Arabidopsis thaliana (Mouse-ear cress).